Reading from the N-terminus, the 745-residue chain is Meiotic driver SPOK3 (745 aa).

Residues 4–34 (KDRITQLLRELEEAKAREAQERCEKERLQLE) adopt a coiled-coil conformation. 2 disordered regions span residues 173 to 222 (ELTQ…DGVG) and 407 to 487 (LSSA…VDPQ). Over residues 188–197 (TSDRSLERRQ) the composition is skewed to basic and acidic residues. 2 stretches are compositionally biased toward polar residues: residues 208 to 217 (KSKYICSNRQ) and 409 to 422 (SAPS…SEYT). The required for antidote activity stretch occupies residues 214 to 325 (SNRQPDGVGI…LLLYVDRDDW (112 aa)). Over residues 466 to 482 (AKRERGPSSGGKDDGRS) the composition is skewed to basic and acidic residues. Residues 491–745 (QYCTQACLLG…SPMATPSHGG (255 aa)) are required for poison activity.

The protein localises to the cytoplasm. Its subcellular location is the nucleus. In terms of biological role, promotes unequal transmission of alleles from the parental zygote to progeny spores by acting as poison/antidote system, leading to poisoning of progeny that do not inherit the allele. May possess DNA nuclease activity that leads to spore killing, and a kinase activity that confers resistance to the nuclease activity. This Podospora anserina (Pleurage anserina) protein is Meiotic driver SPOK3.